The sequence spans 86 residues: Toxin TdNa7 (86 aa).

The first 20 residues, 1-20 (MTRFVLFLSCFFLIGMVVEC), serve as a signal peptide directing secretion. Residues 21–83 (KDGYLMGPDG…TWERATNTCG (63 aa)) form the LCN-type CS-alpha/beta domain. 4 cysteine pairs are disulfide-bonded: C31-C82, C35-C57, C43-C63, and C47-C65. Lysine amide is present on K84.

Belongs to the long (4 C-C) scorpion toxin superfamily. Sodium channel inhibitor family. Beta subfamily. As to expression, expressed by the venom gland.

The protein resides in the secreted. Functionally, beta toxins bind voltage-independently at site-4 of sodium channels (Nav) and shift the voltage of activation toward more negative potentials thereby affecting sodium channel activation and promoting spontaneous and repetitive firing. The polypeptide is Toxin TdNa7 (Tityus discrepans (Venezuelan scorpion)).